A 311-amino-acid chain; its full sequence is Malate dehydrogenase (311 aa).

NAD(+) is bound by residues 7 to 13 and aspartate 34; that span reads GAAGGIG. The substrate site is built by arginine 81 and arginine 87. Residues asparagine 94 and 117-119 each bind NAD(+); that span reads ITN. Residues asparagine 119 and arginine 153 each contribute to the substrate site. The Proton acceptor role is filled by histidine 177. Position 227 (methionine 227) interacts with NAD(+).

The protein belongs to the LDH/MDH superfamily. MDH type 1 family. In terms of assembly, homodimer.

The enzyme catalyses (S)-malate + NAD(+) = oxaloacetate + NADH + H(+). Its function is as follows. Catalyzes the reversible oxidation of malate to oxaloacetate. The sequence is that of Malate dehydrogenase from Shewanella halifaxensis (strain HAW-EB4).